Consider the following 690-residue polypeptide: Putative glycerophosphocholine phosphodiesterase GPCPD1 homolog 1 (690 aa).

In terms of domain architecture, CBM20 spans 1–122 (MDQDYKAHFK…RKNITDQFGS (122 aa)). One can recognise a GP-PDE domain in the interval 344–654 (MLQIGHRGMG…DRIGEDEVLK (311 aa)). Positions 670–690 (ARSQHNSRSPSMSRRCMSTVE) are disordered. Residues 676–690 (SRSPSMSRRCMSTVE) show a composition bias toward low complexity.

Belongs to the glycerophosphoryl diester phosphodiesterase family.

The chain is Putative glycerophosphocholine phosphodiesterase GPCPD1 homolog 1 from Caenorhabditis elegans.